The chain runs to 1486 residues: Chromosome partition protein MukB (1486 aa).

34 to 41 serves as a coordination point for ATP; it reads GGNGAGKS. Coiled-coil stretches lie at residues 326-418, 444-480, and 509-603; these read LEAD…QYNQ, LETFQAKELEATEKMLSLEQKMSMAQTAHSQFEQAYQ, and RHLA…RAPV. The segment at 666–783 is flexible hinge; it reads PGGSEDQRLN…EVPLFGRAAR (118 aa). Coiled coils occupy residues 835-923, 977-1115, and 1209-1265; these read EAEI…AKLE, EMLS…TAKA, and VEAI…LQSV.

It belongs to the SMC family. MukB subfamily. As to quaternary structure, homodimerization via its hinge domain. Binds to DNA via its C-terminal region. Interacts, and probably forms a ternary complex, with MukE and MukF via its C-terminal region. The complex formation is stimulated by calcium or magnesium. Interacts with tubulin-related protein FtsZ.

Its subcellular location is the cytoplasm. The protein resides in the nucleoid. Plays a central role in chromosome condensation, segregation and cell cycle progression. Functions as a homodimer, which is essential for chromosome partition. Involved in negative DNA supercoiling in vivo, and by this means organize and compact chromosomes. May achieve or facilitate chromosome segregation by condensation DNA from both sides of a centrally located replisome during cell division. This Escherichia coli O7:K1 (strain IAI39 / ExPEC) protein is Chromosome partition protein MukB.